The primary structure comprises 188 residues: ATP synthase subunit b 1 (188 aa).

A helical transmembrane segment spans residues 7–27 (LSVLALAMLAANPAFAAGGGI).

Belongs to the ATPase B chain family. F-type ATPases have 2 components, F(1) - the catalytic core - and F(0) - the membrane proton channel. F(1) has five subunits: alpha(3), beta(3), gamma(1), delta(1), epsilon(1). F(0) has three main subunits: a(1), b(2) and c(10-14). The alpha and beta chains form an alternating ring which encloses part of the gamma chain. F(1) is attached to F(0) by a central stalk formed by the gamma and epsilon chains, while a peripheral stalk is formed by the delta and b chains.

The protein localises to the cell inner membrane. Functionally, f(1)F(0) ATP synthase produces ATP from ADP in the presence of a proton or sodium gradient. F-type ATPases consist of two structural domains, F(1) containing the extramembraneous catalytic core and F(0) containing the membrane proton channel, linked together by a central stalk and a peripheral stalk. During catalysis, ATP synthesis in the catalytic domain of F(1) is coupled via a rotary mechanism of the central stalk subunits to proton translocation. Its function is as follows. Component of the F(0) channel, it forms part of the peripheral stalk, linking F(1) to F(0). The polypeptide is ATP synthase subunit b 1 (Roseobacter denitrificans (strain ATCC 33942 / OCh 114) (Erythrobacter sp. (strain OCh 114))).